A 67-amino-acid chain; its full sequence is Protein AaeX (67 aa).

Helical transmembrane passes span 10–30 (FGLSFPPVFFVLMVSLTLFFV) and 43–63 (FVWHPALFNSALFCCLFYLLF).

This sequence belongs to the AaeX family.

It is found in the cell membrane. The polypeptide is Protein AaeX (Pectobacterium atrosepticum (strain SCRI 1043 / ATCC BAA-672) (Erwinia carotovora subsp. atroseptica)).